Here is a 49-residue protein sequence, read N- to C-terminus: Large ribosomal subunit protein bL33B (49 aa).

This sequence belongs to the bacterial ribosomal protein bL33 family.

This is Large ribosomal subunit protein bL33B from Lactobacillus helveticus (strain DPC 4571).